A 705-amino-acid polypeptide reads, in one-letter code: Elongation factor G (705 aa).

The region spanning 7 to 287 (HLTRNIGIMA…YVCAFLPSPL (281 aa)) is the tr-type G domain. Residues 16–23 (AHIDAGKT), 84–88 (DTPGH), and 138–141 (NKMD) contribute to the GTP site.

It belongs to the TRAFAC class translation factor GTPase superfamily. Classic translation factor GTPase family. EF-G/EF-2 subfamily.

The protein localises to the cytoplasm. Its function is as follows. Catalyzes the GTP-dependent ribosomal translocation step during translation elongation. During this step, the ribosome changes from the pre-translocational (PRE) to the post-translocational (POST) state as the newly formed A-site-bound peptidyl-tRNA and P-site-bound deacylated tRNA move to the P and E sites, respectively. Catalyzes the coordinated movement of the two tRNA molecules, the mRNA and conformational changes in the ribosome. This Bacteroides thetaiotaomicron (strain ATCC 29148 / DSM 2079 / JCM 5827 / CCUG 10774 / NCTC 10582 / VPI-5482 / E50) protein is Elongation factor G.